The following is a 119-amino-acid chain: Autophagy-related protein 8c (119 aa).

Gly-117 is lipidated: Phosphatidylethanolamine amidated glycine. Positions 118-119 (LV) are cleaved as a propeptide — removed in mature form.

This sequence belongs to the ATG8 family. As to quaternary structure, interacts with ATG4. Interacts with NBR1. In terms of processing, the C-terminal 2 residues are removed by ATG4 to expose Gly-117 at the C-terminus. This Gly-117 forms then a thioester bond with the 'Cys-558' of ATG7 (E1-like activating enzyme) before being transferred to the 'Cys-258' of ATG3 (the specific E2 conjugating enzyme), in order to be finally amidated with phosphatidylethanolamine. This lipid modification anchors ATG8 to autophagosomes. In terms of tissue distribution, constitutively expressed.

It is found in the cytoplasmic vesicle. The protein localises to the autophagosome membrane. It localises to the vacuole membrane. The protein resides in the cytoplasm. Its subcellular location is the cytoskeleton. Ubiquitin-like modifier involved in autophagosomes formation. May mediate the delivery of the autophagosomes to the vacuole via the microtubule cytoskeleton. This is Autophagy-related protein 8c (ATG8C) from Arabidopsis thaliana (Mouse-ear cress).